A 277-amino-acid chain; its full sequence is Large ribosomal subunit protein uL2 (277 aa).

The segment at 220–277 (VRGSVMNPNDHPHGGGEGKAPIGRPSPMSPWGKKTLGKKTRSSKARSEKLIIRHRKSR) is disordered. Basic residues predominate over residues 254–263 (TLGKKTRSSK).

Belongs to the universal ribosomal protein uL2 family. As to quaternary structure, part of the 50S ribosomal subunit. Forms a bridge to the 30S subunit in the 70S ribosome.

One of the primary rRNA binding proteins. Required for association of the 30S and 50S subunits to form the 70S ribosome, for tRNA binding and peptide bond formation. It has been suggested to have peptidyltransferase activity; this is somewhat controversial. Makes several contacts with the 16S rRNA in the 70S ribosome. This is Large ribosomal subunit protein uL2 from Latilactobacillus sakei subsp. sakei (strain 23K) (Lactobacillus sakei subsp. sakei).